Consider the following 441-residue polypeptide: N-succinylarginine dihydrolase (441 aa).

Substrate is bound by residues Ala19–Ser28, Asn110, and His137–Arg138. The active site involves Glu174. Position 212 (Arg212) interacts with substrate. The active site involves His248. Substrate contacts are provided by Asp250 and Asn359. Catalysis depends on Cys365, which acts as the Nucleophile.

The protein belongs to the succinylarginine dihydrolase family. As to quaternary structure, homodimer.

The catalysed reaction is N(2)-succinyl-L-arginine + 2 H2O + 2 H(+) = N(2)-succinyl-L-ornithine + 2 NH4(+) + CO2. It functions in the pathway amino-acid degradation; L-arginine degradation via AST pathway; L-glutamate and succinate from L-arginine: step 2/5. Catalyzes the hydrolysis of N(2)-succinylarginine into N(2)-succinylornithine, ammonia and CO(2). This is N-succinylarginine dihydrolase from Cronobacter sakazakii (strain ATCC BAA-894) (Enterobacter sakazakii).